A 596-amino-acid chain; its full sequence is Ubiquilin-4 (596 aa).

A Ubiquitin-like domain is found at 13 to 87 (IRVTVKTPKD…VHLVIKTPQK (75 aa)). Glycyl lysine isopeptide (Lys-Gly) (interchain with G-Cter in SUMO2) cross-links involve residues Lys-23 and Lys-62. Residues 89 to 148 (QDPVTAAASPPSTPDSASAPSTTPASPAAAPVQPCSSGNTTSDAGSGGGPSPVAAEGPSS) are disordered. Low complexity-rich tracts occupy residues 93–119 (TAAASPPSTPDSASAPSTTPASPAAAP) and 139–148 (SPVAAEGPSS). Ser-139 is subject to Phosphoserine. 2 consecutive STI1 domains span residues 187 to 224 (NPEMLSQIMENPLVQDMMSNPDLMRHMIMANPQMQQLM) and 225 to 256 (ERNPEISHMLNNPELMRQTMELARNPAMMQEM). Thr-282 is subject to Phosphothreonine. Residues 297–361 (GNNPFSSLAG…QVHPTVSNPF (65 aa)) form a disordered region. Over residues 302-313 (SSLAGNSDNSSS) the composition is skewed to low complexity. Ser-313 is subject to Phosphoserine. The segment covering 324–335 (LPNPWSPSPPTS) has biased composition (pro residues). Residues 339–349 (GSGGEGTGGSG) are compositionally biased toward gly residues. The span at 352-361 (QVHPTVSNPF) shows a compositional bias: polar residues. STI1 domains are found at residues 388 to 435 (NPQL…QEQL) and 439 to 471 (LPVFLQQMQNPESLSILTNPRAMQALLQIQQGL). The interval 482 to 528 (VPSLGSFGTPRTSVPLAGSNSGSSAEAPTSSPGVPATSPPSAGSNAQ) is disordered. Residues 499–513 (GSNSGSSAEAPTSSP) are compositionally biased toward polar residues. The 46-residue stretch at 548–593 (PMPEVRFQQQLEQLNSMGFINREANLQALIATGGDINAAIERLLGS) folds into the UBA domain.

As to quaternary structure, homooligomer. Binds signal sequences of proteins that are targeted to the endoplasmic reticulum. Interacts (via UBA domain) with GJA1 (not ubiquitinated) and with ubiquitin; both compete for the same binding site. Interacts (via UBA domain) with ubiquitin and with polyubiquitin chains. Interacts (via ubiquitin-like domain) with PSMD2 and PSMD4, regulatory subunits of the 26S proteasome. Interacts with ATXN1/SCA1; interaction with ATXN1 inhibits polyubiquitination of UBQLN4 and interferes with PSMD4 binding. Interacts with HERPUD1. Interacts (via ubiquitin-like domain) with UBQLN1 (via UBA domain). Interacts with UBQLN2. Interacts (via STI1 1 and 2 domains) with MAP1LC3A/B/C. Interacts with BAG6. Interacts with MRE11 (when ubiquitinated); interaction with ubiquitinated MRE11 leads to MRE11 removal from chromatin. Interacts with DESI1/POST; leading to nuclear export. Interacts with BCL2A1 and BCL2L10. Post-translationally, phosphorylated by ATM at Ser-313 in response to DNA damage, leading to localization in the nucleus and recruitment to sites of DNA damage. In terms of processing, ubiquitinated; this does not lead to proteasomal degradation. May undergo both 'Lys-48'- and 'Lys-63'-linked polyubiquitination. In terms of tissue distribution, detected in testis, ovary, thyroid, kidney, thymus, heart, liver, lung and spleen (at protein level). Highly expressed in heart, skeletal muscle, kidney, liver and brain. Detected at lower levels in testis, lung and spleen.

The protein resides in the nucleus. The protein localises to the cytoplasm. It is found in the chromosome. Its subcellular location is the endoplasmic reticulum. It localises to the perinuclear region. The protein resides in the cytoplasmic vesicle. The protein localises to the autophagosome. Functionally, regulator of protein degradation that mediates the proteasomal targeting of misfolded, mislocalized or accumulated proteins. Acts by binding polyubiquitin chains of target proteins via its UBA domain and by interacting with subunits of the proteasome via its ubiquitin-like domain. Key regulator of DNA repair that represses homologous recombination repair: in response to DNA damage, recruited to sites of DNA damage following phosphorylation by ATM and acts by binding and removing ubiquitinated MRE11 from damaged chromatin, leading to MRE11 degradation by the proteasome. MRE11 degradation prevents homologous recombination repair, redirecting double-strand break repair toward non-homologous end joining (NHEJ). Specifically recognizes and binds mislocalized transmembrane-containing proteins and targets them to proteasomal degradation. Collaborates with DESI1/POST in the export of ubiquitinated proteins from the nucleus to the cytoplasm. Plays a role in the regulation of the proteasomal degradation of non-ubiquitinated GJA1. Acts as an adapter protein that recruits UBQLN1 to the autophagy machinery. Mediates the association of UBQLN1 with autophagosomes and the autophagy-related protein LC3 (MAP1LC3A/B/C) and may assist in the maturation of autophagosomes to autolysosomes by mediating autophagosome-lysosome fusion. This is Ubiquilin-4 from Mus musculus (Mouse).